A 516-amino-acid chain; its full sequence is Probable cytosol aminopeptidase (516 aa).

Mn(2+) contacts are provided by K288 and D293. Residue K300 is part of the active site. 3 residues coordinate Mn(2+): D311, D370, and E372. Residue R374 is part of the active site.

It belongs to the peptidase M17 family. The cofactor is Mn(2+).

The protein localises to the cytoplasm. It carries out the reaction Release of an N-terminal amino acid, Xaa-|-Yaa-, in which Xaa is preferably Leu, but may be other amino acids including Pro although not Arg or Lys, and Yaa may be Pro. Amino acid amides and methyl esters are also readily hydrolyzed, but rates on arylamides are exceedingly low.. It catalyses the reaction Release of an N-terminal amino acid, preferentially leucine, but not glutamic or aspartic acids.. Functionally, presumably involved in the processing and regular turnover of intracellular proteins. Catalyzes the removal of unsubstituted N-terminal amino acids from various peptides. This chain is Probable cytosol aminopeptidase, found in Cupriavidus taiwanensis (strain DSM 17343 / BCRC 17206 / CCUG 44338 / CIP 107171 / LMG 19424 / R1) (Ralstonia taiwanensis (strain LMG 19424)).